A 434-amino-acid polypeptide reads, in one-letter code: V-type ATP synthase beta chain (434 aa).

The protein belongs to the ATPase alpha/beta chains family.

Its function is as follows. Produces ATP from ADP in the presence of a proton gradient across the membrane. The V-type beta chain is a regulatory subunit. This Borreliella afzelii (strain PKo) (Borrelia afzelii) protein is V-type ATP synthase beta chain.